Consider the following 852-residue polypeptide: Probable inorganic carbon transporter subunit DabA (852 aa).

4 residues coordinate Zn(2+): cysteine 370, aspartate 372, histidine 554, and cysteine 569.

Belongs to the inorganic carbon transporter (TC 9.A.2) DabA family. As to quaternary structure, forms a complex with DabB. Zn(2+) serves as cofactor.

The protein resides in the cell inner membrane. Its function is as follows. Part of an energy-coupled inorganic carbon pump. This is Probable inorganic carbon transporter subunit DabA from Novosphingobium aromaticivorans (strain ATCC 700278 / DSM 12444 / CCUG 56034 / CIP 105152 / NBRC 16084 / F199).